Reading from the N-terminus, the 354-residue chain is Probable tartrate dehydrogenase/decarboxylase (354 aa).

Residues D221, D245, and D249 each contribute to the Mn(2+) site.

It belongs to the isocitrate and isopropylmalate dehydrogenases family. Mg(2+) is required as a cofactor. It depends on Mn(2+) as a cofactor. Requires K(+) as cofactor.

The enzyme catalyses tartrate + NAD(+) = 2-hydroxy-3-oxosuccinate + NADH + H(+). The catalysed reaction is (2R,3S)-tartrate + NAD(+) = 2-hydroxy-3-oxosuccinate + NADH + H(+). It carries out the reaction (2R,3R)-tartrate + NAD(+) = 2-hydroxy-3-oxosuccinate + NADH + H(+). It catalyses the reaction (2R,3R)-tartrate + H(+) = (R)-glycerate + CO2. The enzyme catalyses (R)-malate + NAD(+) = pyruvate + CO2 + NADH. Has multiple catalytic activities. Apart from catalyzing the oxidation of (+)-tartrate to oxaloglycolate, also converts meso-tartrate to D-glycerate and catalyzes the oxidative decarboxylation of D-malate to pyruvate. The protein is Probable tartrate dehydrogenase/decarboxylase (ycsA) of Bacillus subtilis (strain 168).